The following is a 108-amino-acid chain: Tetrahydromethanopterin S-methyltransferase subunit B (108 aa).

A helical membrane pass occupies residues 79–99 (GMFFGFWVTMAILVLVTILAV).

This sequence belongs to the MtrB family. As to quaternary structure, the complex is composed of 8 subunits; MtrA, MtrB, MtrC, MtrD, MtrE, MtrF, MtrG and MtrH.

The protein resides in the cell membrane. It carries out the reaction 5-methyl-5,6,7,8-tetrahydromethanopterin + coenzyme M + 2 Na(+)(in) = 5,6,7,8-tetrahydromethanopterin + methyl-coenzyme M + 2 Na(+)(out). The protein operates within one-carbon metabolism; methanogenesis from CO(2); methyl-coenzyme M from 5,10-methylene-5,6,7,8-tetrahydromethanopterin: step 2/2. Functionally, part of a complex that catalyzes the formation of methyl-coenzyme M and tetrahydromethanopterin from coenzyme M and methyl-tetrahydromethanopterin. This is an energy-conserving, sodium-ion translocating step. The polypeptide is Tetrahydromethanopterin S-methyltransferase subunit B (Methanococcus maripaludis (strain C7 / ATCC BAA-1331)).